Reading from the N-terminus, the 479-residue chain is UDP-glycosyltransferase 71B6 (479 aa).

UDP-alpha-D-glucose-binding positions include serine 275, 342–344 (AEQ), 359–367 (HGGWNSTLE), and 381–384 (YAEQ).

Belongs to the UDP-glycosyltransferase family.

Functionally, glucosyltransferase that glucosylates the (+) enantiomer of abscisic acid ((+)-ABA). Is not active on structural analogs with alterations to the 8'- and 9'- methyl groups. This Arabidopsis thaliana (Mouse-ear cress) protein is UDP-glycosyltransferase 71B6 (UGT71B6).